Reading from the N-terminus, the 337-residue chain is MPLQLAKSLKLHNDKVWSIDFEPVRGLLATGSTDRAIKVLQLKNGKENLLDVLDDTVHKKAVRSVAWRPHSDLLAAGSFDSTISIWTQSDLDLEEGAKLEMELLAIIEGHENEVKGISWSQDGCLLATCSRDKSVWIWETDEAGEEYECISVLQEHSQDVKHVVWHTKHNLLASSSYDDTVRIWKDYDDDWECAAVLTGHEGTIWCSDFSKEEDPIRLCSGSDDSTVRVWKYIGDDEDDQQEWVCESTLPNAHRSQIYGVAWSPSGRIASVGADGVLAVYKEKQNDSEVSEWEISATYKAAHTVYEINTVKWVNIDGKEMLITAGDDGRVNLWNYQD.

7 WD repeats span residues 11 to 50, 57 to 96, 109 to 148, 155 to 194, 199 to 240, 252 to 290, and 301 to 337; these read LHND…ENLL, VHKK…LEEG, GHEN…EEYE, EHSQ…WECA, GHEG…EDDQ, AHRS…SEVS, and AHTV…NYQD.

This sequence belongs to the WD repeat CIA1 family. As to quaternary structure, interacts with NAR1.

Its subcellular location is the cytoplasm. The protein resides in the nucleus. Essential component of the cytosolic iron-sulfur (Fe/S) protein assembly machinery. Required for the maturation of extramitochondrial Fe/S proteins. The sequence is that of Probable cytosolic iron-sulfur protein assembly protein 1 from Candida glabrata (strain ATCC 2001 / BCRC 20586 / JCM 3761 / NBRC 0622 / NRRL Y-65 / CBS 138) (Yeast).